The following is a 106-amino-acid chain: Iron-sulfur cluster assembly protein CyaY (106 aa).

This sequence belongs to the frataxin family.

Involved in iron-sulfur (Fe-S) cluster assembly. May act as a regulator of Fe-S biogenesis. In Escherichia fergusonii (strain ATCC 35469 / DSM 13698 / CCUG 18766 / IAM 14443 / JCM 21226 / LMG 7866 / NBRC 102419 / NCTC 12128 / CDC 0568-73), this protein is Iron-sulfur cluster assembly protein CyaY.